The sequence spans 320 residues: Cytochrome f (320 aa).

The signal sequence occupies residues 1–36; the sequence is MKHTNSKQKLKDIINFCQAIFTLCIICLYQANISNS. Residues Tyr37, Cys57, Cys60, and His61 each contribute to the heme site. Residues 286–305 form a helical membrane-spanning segment; it reads LISFIFFSISVLISQLFFVL.

The protein belongs to the cytochrome f family. As to quaternary structure, the 4 large subunits of the cytochrome b6-f complex are cytochrome b6, subunit IV (17 kDa polypeptide, petD), cytochrome f and the Rieske protein, while the 4 small subunits are PetG, PetL, PetM and PetN. The complex functions as a dimer. It depends on heme as a cofactor.

It localises to the plastid. The protein resides in the chloroplast thylakoid membrane. Functionally, component of the cytochrome b6-f complex, which mediates electron transfer between photosystem II (PSII) and photosystem I (PSI), cyclic electron flow around PSI, and state transitions. This Cyanidium caldarium (Red alga) protein is Cytochrome f (petA).